The following is a 97-amino-acid chain: MATSSKVKKSVRIASGRKRVRQDVRLNAANTSLRSKFRTAIKGVLKAVATGDKAKAGETFKSAQKVIDSIADKGLFHKNKAARYKSRLSAKIKALAA.

This sequence belongs to the bacterial ribosomal protein bS20 family.

Binds directly to 16S ribosomal RNA. This chain is Small ribosomal subunit protein bS20, found in Methylibium petroleiphilum (strain ATCC BAA-1232 / LMG 22953 / PM1).